The sequence spans 483 residues: Glycogen synthase (483 aa).

K15 lines the ADP-alpha-D-glucose pocket.

The protein belongs to the glycosyltransferase 1 family. Bacterial/plant glycogen synthase subfamily.

The enzyme catalyses [(1-&gt;4)-alpha-D-glucosyl](n) + ADP-alpha-D-glucose = [(1-&gt;4)-alpha-D-glucosyl](n+1) + ADP + H(+). Its pathway is glycan biosynthesis; glycogen biosynthesis. In terms of biological role, synthesizes alpha-1,4-glucan chains using ADP-glucose. This chain is Glycogen synthase, found in Desulfatibacillum aliphaticivorans.